A 200-amino-acid chain; its full sequence is UPF0301 protein BruAb1_0502 (200 aa).

This sequence belongs to the UPF0301 (AlgH) family.

The sequence is that of UPF0301 protein BruAb1_0502 from Brucella abortus biovar 1 (strain 9-941).